The chain runs to 97 residues: Aspartyl/glutamyl-tRNA(Asn/Gln) amidotransferase subunit C (97 aa).

The protein belongs to the GatC family. Heterotrimer of A, B and C subunits.

It catalyses the reaction L-glutamyl-tRNA(Gln) + L-glutamine + ATP + H2O = L-glutaminyl-tRNA(Gln) + L-glutamate + ADP + phosphate + H(+). The catalysed reaction is L-aspartyl-tRNA(Asn) + L-glutamine + ATP + H2O = L-asparaginyl-tRNA(Asn) + L-glutamate + ADP + phosphate + 2 H(+). In terms of biological role, allows the formation of correctly charged Asn-tRNA(Asn) or Gln-tRNA(Gln) through the transamidation of misacylated Asp-tRNA(Asn) or Glu-tRNA(Gln) in organisms which lack either or both of asparaginyl-tRNA or glutaminyl-tRNA synthetases. The reaction takes place in the presence of glutamine and ATP through an activated phospho-Asp-tRNA(Asn) or phospho-Glu-tRNA(Gln). This chain is Aspartyl/glutamyl-tRNA(Asn/Gln) amidotransferase subunit C, found in Listeria innocua serovar 6a (strain ATCC BAA-680 / CLIP 11262).